Here is a 344-residue protein sequence, read N- to C-terminus: Tetraacyldisaccharide 4'-kinase (344 aa).

Position 65-72 (65-72) interacts with ATP; sequence HAGGTGKT.

The protein belongs to the LpxK family.

It carries out the reaction a lipid A disaccharide + ATP = a lipid IVA + ADP + H(+). It functions in the pathway glycolipid biosynthesis; lipid IV(A) biosynthesis; lipid IV(A) from (3R)-3-hydroxytetradecanoyl-[acyl-carrier-protein] and UDP-N-acetyl-alpha-D-glucosamine: step 6/6. In terms of biological role, transfers the gamma-phosphate of ATP to the 4'-position of a tetraacyldisaccharide 1-phosphate intermediate (termed DS-1-P) to form tetraacyldisaccharide 1,4'-bis-phosphate (lipid IVA). The sequence is that of Tetraacyldisaccharide 4'-kinase from Neisseria meningitidis serogroup C / serotype 2a (strain ATCC 700532 / DSM 15464 / FAM18).